Reading from the N-terminus, the 169-residue chain is NADH-quinone oxidoreductase subunit B (169 aa).

Cys42, Cys43, Cys107, and Cys136 together coordinate [4Fe-4S] cluster.

It belongs to the complex I 20 kDa subunit family. In terms of assembly, NDH-1 is composed of 14 different subunits. Subunits NuoB, C, D, E, F, and G constitute the peripheral sector of the complex. [4Fe-4S] cluster is required as a cofactor.

The protein localises to the cell inner membrane. The enzyme catalyses a quinone + NADH + 5 H(+)(in) = a quinol + NAD(+) + 4 H(+)(out). In terms of biological role, NDH-1 shuttles electrons from NADH, via FMN and iron-sulfur (Fe-S) centers, to quinones in the respiratory chain. Couples the redox reaction to proton translocation (for every two electrons transferred, four hydrogen ions are translocated across the cytoplasmic membrane), and thus conserves the redox energy in a proton gradient. In Campylobacter hominis (strain ATCC BAA-381 / DSM 21671 / CCUG 45161 / LMG 19568 / NCTC 13146 / CH001A), this protein is NADH-quinone oxidoreductase subunit B.